The primary structure comprises 280 residues: MRIALAQIRSGTDPAANLQLVGKYAGEAATAGAQLVVFPEATMCRLGVPLRQVAEPVDGPWANGVRRIATEAGITVIAGMFTPTGDGRVTNTLIAAGPGTPNQPDAHYHKIHLYDAFGFTESRTVAPGREPVVVVVDGVRVGLTVCYDIRFPALYTELARRGAQLIAVCASWGSGPGKLEQWTLLARARALDSMSYVAAAGQADPGDARTGVGASSAAPTGVGGSLVASPLGEVVVSAGTQPQLLVADIDVDNVAAARDRIAVLRNQTDFVQIDKAQSRG.

The 251-residue stretch at 1-251 folds into the CN hydrolase domain; it reads MRIALAQIRS…PQLLVADIDV (251 aa). Catalysis depends on Glu-40, which acts as the Proton acceptor. The active-site Proton donor is the Lys-110. Cys-146 functions as the Nucleophile in the catalytic mechanism.

Belongs to the carbon-nitrogen hydrolase superfamily. NIT1/NIT2 family.

This Mycobacterium tuberculosis (strain CDC 1551 / Oshkosh) protein is Hydrolase MT0498.